A 113-amino-acid polypeptide reads, in one-letter code: U11-theraphotoxin-Hhn1o (113 aa).

A signal peptide spans 1-21 (MNTVRVTFLLVFVLAVSLGQA). Positions 22-74 (DKDENRMEMQEKTEQGKSYLDFAENLLLQKLEELEAKLLEEDSEESRNSRQKR) are excised as a propeptide. Residues 61 to 83 (EEDSEESRNSRQKRCIGEGVPCD) form a disordered region. Intrachain disulfides connect Cys75–Cys90 and Cys82–Cys95.

It belongs to the neurotoxin 14 (magi-1) family. 01 (HNTX-16) subfamily. Expressed by the venom gland.

Its subcellular location is the secreted. Probable ion channel inhibitor. This Cyriopagopus hainanus (Chinese bird spider) protein is U11-theraphotoxin-Hhn1o.